We begin with the raw amino-acid sequence, 657 residues long: 1-deoxy-D-xylulose-5-phosphate synthase (657 aa).

Residues histidine 73 and serine 113–alanine 115 contribute to the thiamine diphosphate site. A Mg(2+)-binding site is contributed by aspartate 145. Residues glycine 146–alanine 147, asparagine 175, tyrosine 293, and glutamate 375 each bind thiamine diphosphate. Asparagine 175 provides a ligand contact to Mg(2+).

It belongs to the transketolase family. DXPS subfamily. In terms of assembly, homodimer. Mg(2+) is required as a cofactor. It depends on thiamine diphosphate as a cofactor.

The catalysed reaction is D-glyceraldehyde 3-phosphate + pyruvate + H(+) = 1-deoxy-D-xylulose 5-phosphate + CO2. It participates in metabolic intermediate biosynthesis; 1-deoxy-D-xylulose 5-phosphate biosynthesis; 1-deoxy-D-xylulose 5-phosphate from D-glyceraldehyde 3-phosphate and pyruvate: step 1/1. In terms of biological role, catalyzes the acyloin condensation reaction between C atoms 2 and 3 of pyruvate and glyceraldehyde 3-phosphate to yield 1-deoxy-D-xylulose-5-phosphate (DXP). This is 1-deoxy-D-xylulose-5-phosphate synthase from Paenarthrobacter aurescens (strain TC1).